Reading from the N-terminus, the 462-residue chain is L-seryl-tRNA(Sec) selenium transferase (462 aa).

Residue K294 is modified to N6-(pyridoxal phosphate)lysine.

The protein belongs to the SelA family. As to quaternary structure, homodecamer; pentamer of dimers. Binds only one seryl-tRNA(Sec) per dimer. The cofactor is pyridoxal 5'-phosphate.

It localises to the cytoplasm. It catalyses the reaction L-seryl-tRNA(Sec) + selenophosphate + H(+) = L-selenocysteinyl-tRNA(Sec) + phosphate. Its pathway is aminoacyl-tRNA biosynthesis; selenocysteinyl-tRNA(Sec) biosynthesis; selenocysteinyl-tRNA(Sec) from L-seryl-tRNA(Sec) (bacterial route): step 1/1. Its function is as follows. Converts seryl-tRNA(Sec) to selenocysteinyl-tRNA(Sec) required for selenoprotein biosynthesis. In Yersinia pestis bv. Antiqua (strain Antiqua), this protein is L-seryl-tRNA(Sec) selenium transferase.